The following is a 176-amino-acid chain: Siroheme decarboxylase alpha subunit (176 aa).

Residues 1–24 (MTEAHNACCHPSGTAAGHHGAGKA) are disordered. A compositionally biased stretch (low complexity) spans 12–24 (SGTAAGHHGAGKA).

The protein belongs to the Ahb/Nir family. Forms a heterodimer composed of AhbA and AhbB. Also forms heterotetramers.

The catalysed reaction is siroheme + 2 H(+) = 12,18-didecarboxysiroheme + 2 CO2. It functions in the pathway porphyrin-containing compound metabolism; protoheme biosynthesis. Functionally, involved in siroheme-dependent heme b biosynthesis. Catalyzes the decarboxylation of siroheme into didecarboxysiroheme. The polypeptide is Siroheme decarboxylase alpha subunit (Nitratidesulfovibrio vulgaris (strain ATCC 29579 / DSM 644 / CCUG 34227 / NCIMB 8303 / VKM B-1760 / Hildenborough) (Desulfovibrio vulgaris)).